We begin with the raw amino-acid sequence, 527 residues long: Proline--tRNA ligase (527 aa).

The protein belongs to the class-II aminoacyl-tRNA synthetase family. ProS type 3 subfamily. As to quaternary structure, homodimer.

The protein resides in the cytoplasm. The catalysed reaction is tRNA(Pro) + L-proline + ATP = L-prolyl-tRNA(Pro) + AMP + diphosphate. Its function is as follows. Catalyzes the attachment of proline to tRNA(Pro) in a two-step reaction: proline is first activated by ATP to form Pro-AMP and then transferred to the acceptor end of tRNA(Pro). This Sphingopyxis alaskensis (strain DSM 13593 / LMG 18877 / RB2256) (Sphingomonas alaskensis) protein is Proline--tRNA ligase.